Reading from the N-terminus, the 400-residue chain is D(3) dopamine receptor (400 aa).

Over 1-32 (MASLSQLSGHLNYTCGAENSTGASQARPHAYY) the chain is Extracellular. Asparagine 12 and asparagine 19 each carry an N-linked (GlcNAc...) asparagine glycan. Residues 33–55 (ALSYCALILAIVFGNGLVCMAVL) form a helical membrane-spanning segment. At 56 to 65 (KERALQTTTN) the chain is on the cytoplasmic side. A helical transmembrane segment spans residues 66–88 (YLVVSLAVADLLVATLVMPWVVY). The Extracellular portion of the chain corresponds to 89–104 (LEVTGGVWNFSRICCD). Residue asparagine 97 is glycosylated (N-linked (GlcNAc...) asparagine). The cysteines at positions 103 and 181 are disulfide-linked. The helical transmembrane segment at 105–126 (VFVTLDVMMCTASILNLCAISI) threads the bilayer. Aspartate 110 serves as a coordination point for eticlopride. Residues 127 to 149 (DRYTAVVMPVHYQHGTGQSSCRR) lie on the Cytoplasmic side of the membrane. A helical transmembrane segment spans residues 150–170 (VALMITAVWVLAFAVSCPLLF). Residues 171–187 (GFNTTGDPTVCSISNPD) are Extracellular-facing. The N-linked (GlcNAc...) asparagine glycan is linked to asparagine 173. A helical transmembrane segment spans residues 188–209 (FVIYSSVVSFYLPFGVTVLVYA). The Cytoplasmic portion of the chain corresponds to 210-329 (RIYVVLKQRR…VPLREKKATQ (120 aa)). The chain crosses the membrane as a helical span at residues 330 to 351 (MVAIVLGAFIVCWLPFFLTHVL). Eticlopride is bound by residues phenylalanine 345 and histidine 349. At 352-366 (NTHCQTCHVSPELYS) the chain is on the extracellular side. Cysteine 355 and cysteine 358 are disulfide-bonded. A helical transmembrane segment spans residues 367-386 (ATTWLGYVNSALNPVIYTTF). Residues 387 to 400 (NIEFRKAFLKILSC) lie on the Cytoplasmic side of the membrane.

This sequence belongs to the G-protein coupled receptor 1 family. In terms of assembly, interacts with CLIC6. Interacts with GRK4. Interacts with PALM. Interacts with FLNA (via filamin repeat 21); increases PKA-mediated phosphorylation of FLNA. In terms of processing, phosphorylated by GRK4 (GRK4-alpha and GRK4-gamma). Post-translationally, palmitoylated. As to expression, brain.

It localises to the cell membrane. Functionally, dopamine receptor whose activity is mediated by G proteins which inhibit adenylyl cyclase. Promotes cell proliferation. This Homo sapiens (Human) protein is D(3) dopamine receptor.